Consider the following 891-residue polypeptide: MADVEMMEYVDDVYEMDCPKFVDFSVPQVVDDNADEWFNFDHENGVPLTFDDKAVSPTAKETPTSPLPQDPQESHSVIGHSETDTTLQESSAPEIATSEKQKYASPSDDVSSAESETCEMSTDSMQDKPAVPESAVRNVTDDEATVQESSDAEETQTLPSSCVDSSTAEMSTDSLEDKPQKPQMQESPKPRKRYGNLVTSFARRDEDTTTASSDHSEPEQKKPRSRQRSVEVVSRPTRKSPRLHSRRSAEPTRLKRPSITSQAVKRRSANSALGHPRSRVLSTDQPISKRRKIGSEITPAGRPDAKKSCPKLKAKINLTMPTTPTLLKRNLAKPNTQLKTTEQMELDRIAQFQHKLAAIRKKSALSYKAVKESVPVAPVHAAVQPTRPEEFKFETDARLKSHTMETRKDTKNKDFVGNLRKYVPSPSKPQGITKPRPFNFSDNRKRTHEESFSGEKKGYEFKATALAVSQFHTKTPDRFRSKPLSEQNKGPEPAHDRPKKAKLTQPMTPALESRNRHRPVTAISQAQREEQELADMKNYKFKARPVDPRVMSNIAVGVKTVHHKEPTKPIGFDLEIEKRLLERETNKVQTEERYEFRARPLPAKILAGPVGIAEAKAAAVTIPKSPAFALKERVKVYKEKEREKEKDSEHDNSHIIKARPILHAGVPFMPNIQHKRTEPEPFSFDEKIQESKARKEAKIQETLREEERARQFRAQPLPDLTWCSGVPDKKVKPPTQMAPFSVAEKGAKQAEEWSKKMEEEIRDCKRMANAFKAKPANILYEEPFVPEKSTKPMTDISNFSLNTERRAEDRKGYEQAKYERQLAQDTAQAQREAEKEEELRQQISKQRADSIHKAKPVRHYKAVEVLPSTKPLTQPKTPKFSDRTRRSSHTS.

Residues 42 to 54 (HENGVPLTFDDKA) show a composition bias toward basic and acidic residues. Disordered stretches follow at residues 42 to 310 (HENG…KSCP), 418 to 454 (NLRK…SFSG), 472 to 518 (HTKT…NRHR), 723 to 746 (CSGV…AEKG), and 789 to 891 (STKP…SHTS). A compositionally biased stretch (polar residues) spans 108 to 124 (DDVSSAESETCEMSTDS). The segment covering 141-154 (DDEATVQESSDAEE) has biased composition (acidic residues). The segment covering 155–173 (TQTLPSSCVDSSTAEMSTD) has biased composition (polar residues). Positions 236-246 (PTRKSPRLHSR) are enriched in basic residues. A compositionally biased stretch (basic and acidic residues) spans 442 to 454 (DNRKRTHEESFSG). The segment covering 791–802 (KPMTDISNFSLN) has biased composition (polar residues). Basic and acidic residues-rich tracts occupy residues 803 to 822 (TERR…ERQL) and 831 to 852 (REAE…DSIH).

This sequence belongs to the TPX2 family. As to expression, detectable in immature oocytes.

It is found in the nucleus. The protein localises to the cytoplasm. Its subcellular location is the cytoskeleton. The protein resides in the spindle. In terms of biological role, spindle assembly factor. Required for normal assembly of mitotic spindles. The polypeptide is Targeting protein for Xklp2 homolog (Patiria pectinifera (Starfish)).